A 264-amino-acid chain; its full sequence is MDTRPIGFLDSGVGGLTVVCELIRQLPHEKIVYIGDSARAPYGPRPKKQIKEYTWELVNFLLTQNVKMIVFACNTATAVAWEEVKAALDIPVLGVVLPGASAAIKSTTKGQVGVIGTPMTVASDIYRKKIQLLAPSVQVRSLACPKFVPIVESNEMCSSIAKKIVYDSLAPLVGKIDTLVLGCTHYPLLRPIIQNVMGPSVKLIDSGAECVRDISVLLNYFDINGNYHQKAVEHRFFTTANSEIFQEIASIWLKQKINVEHVTL.

Residues 10-11 (DS) and 42-43 (YG) each bind substrate. Cys-73 acts as the Proton donor/acceptor in catalysis. 74–75 (NT) lines the substrate pocket. The active-site Proton donor/acceptor is the Cys-183. 184–185 (TH) contributes to the substrate binding site.

The protein belongs to the aspartate/glutamate racemases family.

The catalysed reaction is L-glutamate = D-glutamate. The protein operates within cell wall biogenesis; peptidoglycan biosynthesis. Provides the (R)-glutamate required for cell wall biosynthesis. The sequence is that of Glutamate racemase from Streptococcus pyogenes serotype M4 (strain MGAS10750).